Here is a 420-residue protein sequence, read N- to C-terminus: Probable glucuronosyltransferase Os04g0398600 (420 aa).

At 1–4 (MGSR) the chain is on the cytoplasmic side. A helical; Signal-anchor for type II membrane protein transmembrane segment spans residues 5 to 25 (TVGWWLLAAAVVLAAAAADSG). Residues 26–420 (EAERAAEQHS…AGPVGDLKAW (395 aa)) are Lumenal-facing. 2 N-linked (GlcNAc...) asparagine glycosylation sites follow: asparagine 147 and asparagine 408.

It belongs to the glycosyltransferase 47 family.

Its subcellular location is the golgi apparatus membrane. Functionally, involved in the synthesis of glucuronoxylan hemicellulose in secondary cell walls. This Oryza sativa subsp. japonica (Rice) protein is Probable glucuronosyltransferase Os04g0398600.